A 98-amino-acid chain; its full sequence is Large ribosomal subunit protein bL21 (98 aa).

The protein belongs to the bacterial ribosomal protein bL21 family. In terms of assembly, part of the 50S ribosomal subunit. Contacts protein L20.

This protein binds to 23S rRNA in the presence of protein L20. The polypeptide is Large ribosomal subunit protein bL21 (Aquifex aeolicus (strain VF5)).